Consider the following 195-residue polypeptide: Type II secretion system protein J (195 aa).

Residues 1–7 (MINRQQG) constitute a propeptide, leader sequence. An N-methylphenylalanine modification is found at Phe8. The chain crosses the membrane as a helical span at residues 8–29 (FTLLEVMAALAIFSMLSVLAFM).

It belongs to the GSP J family. As to quaternary structure, type II secretion is composed of four main components: the outer membrane complex, the inner membrane complex, the cytoplasmic secretion ATPase and the periplasm-spanning pseudopilus. Interacts with core component GspG. Cleaved by prepilin peptidase. In terms of processing, methylated by prepilin peptidase at the amino group of the N-terminal phenylalanine once the leader sequence is cleaved by prepilin peptidase.

It is found in the cell inner membrane. In terms of biological role, component of the type II secretion system required for the energy-dependent secretion of extracellular factors such as proteases and toxins from the periplasm. Part of the pseudopilus tip complex that is critical for the recognition and binding of secretion substrates. The protein is Type II secretion system protein J (gspJ) of Escherichia coli (strain K12).